Here is a 327-residue protein sequence, read N- to C-terminus: GTPase Obg (327 aa).

The region spanning 1-159 (MQFIDQANII…WEVQLELKLL (159 aa)) is the Obg domain. Positions 160-327 (AEVGIIGLPN…PLLSEVWKRI (168 aa)) constitute an OBG-type G domain. Residues 166 to 173 (GLPNAGKS), 191 to 195 (FTTLI), 213 to 216 (DIPG), 280 to 283 (NKME), and 309 to 311 (SSS) each bind ATP. Ser173 and Thr193 together coordinate Mg(2+).

The protein belongs to the TRAFAC class OBG-HflX-like GTPase superfamily. OBG GTPase family. Monomer. The cofactor is Mg(2+).

It is found in the cytoplasm. Functionally, an essential GTPase which binds GTP, GDP and possibly (p)ppGpp with moderate affinity, with high nucleotide exchange rates and a fairly low GTP hydrolysis rate. Plays a role in control of the cell cycle, stress response, ribosome biogenesis and in those bacteria that undergo differentiation, in morphogenesis control. The sequence is that of GTPase Obg from Prochlorococcus marinus subsp. pastoris (strain CCMP1986 / NIES-2087 / MED4).